A 240-amino-acid chain; its full sequence is Lactate utilization protein C (240 aa).

Belongs to the LutC/YkgG family.

Is involved in L-lactate degradation and allows cells to grow with lactate as the sole carbon source. This is Lactate utilization protein C from Geobacillus thermodenitrificans (strain NG80-2).